Here is a 285-residue protein sequence, read N- to C-terminus: Sulfotransferase 2A1 (285 aa).

K44, S45, G46, T47, N48, and W49 together coordinate 3'-phosphoadenylyl sulfate. The active-site Proton acceptor is H99. 3'-phosphoadenylyl sulfate-binding residues include R121, S129, Y184, S218, M223, R247, K248, and G249. S251 bears the Phosphoserine mark.

Belongs to the sulfotransferase 1 family. Homodimer. In terms of processing, the N-terminus is blocked. Liver, adrenal and at lower level in the kidney. Is present in human fetus in higher level in the adrenal than the liver and the kidney.

The protein localises to the cytoplasm. The enzyme catalyses an alcohol + 3'-phosphoadenylyl sulfate = an alkyl sulfate + adenosine 3',5'-bisphosphate + H(+). It catalyses the reaction (24S)-hydroxycholesterol + 3'-phosphoadenylyl sulfate = (24S)-hydroxycholesterol 24-sulfate + adenosine 3',5'-bisphosphate + H(+). It carries out the reaction (24S)-hydroxycholesterol + 3'-phosphoadenylyl sulfate = (24S)-hydroxycholesterol 3-sulfate + adenosine 3',5'-bisphosphate + H(+). The catalysed reaction is (24S)-hydroxycholesterol 24-sulfate + 3'-phosphoadenylyl sulfate = (24S)-hydroxycholesterol 3,24-disulfate + adenosine 3',5'-bisphosphate + H(+). The enzyme catalyses 3beta-hydroxyandrost-5-en-17-one + 3'-phosphoadenylyl sulfate = dehydroepiandrosterone 3-sulfate + adenosine 3',5'-bisphosphate + H(+). It catalyses the reaction pregnenolone + 3'-phosphoadenylyl sulfate = pregnenolone sulfate + adenosine 3',5'-bisphosphate + H(+). It carries out the reaction androsterone + 3'-phosphoadenylyl sulfate = androsterone 3alpha-sulfate + adenosine 3',5'-bisphosphate + H(+). The catalysed reaction is taurolithocholate + 3'-phosphoadenylyl sulfate = taurolithocholate 3-sulfate + adenosine 3',5'-bisphosphate + H(+). The enzyme catalyses lithocholate + 3'-phosphoadenylyl sulfate = lithocholate sulfate + adenosine 3',5'-bisphosphate + H(+). With respect to regulation, subject to substrate inhibition. Alternate orientations for binding of steroid substrates to SULT2A1 may play a role in substrate inhibition. Functionally, sulfotransferase that utilizes 3'-phospho-5'-adenylyl sulfate (PAPS) as sulfonate donor to catalyze the sulfonation of steroids and bile acids in the liver and adrenal glands. Mediates the sulfation of a wide range of steroids and sterols, including pregnenolone, androsterone, DHEA, bile acids, cholesterol and as well many xenobiotics that contain alcohol and phenol functional groups. Sulfonation increases the water solubility of most compounds, and therefore their renal excretion, but it can also result in bioactivation to form active metabolites. Plays an important role in maintening steroid and lipid homeostasis. Plays a key role in bile acid metabolism. In addition, catalyzes the metabolic activation of potent carcinogenic polycyclic arylmethanols. The chain is Sulfotransferase 2A1 (SULT2A1) from Homo sapiens (Human).